The sequence spans 78 residues: Small ribosomal subunit protein bS16c (78 aa).

It belongs to the bacterial ribosomal protein bS16 family.

It is found in the plastid. The protein resides in the chloroplast. This is Small ribosomal subunit protein bS16c from Chara vulgaris (Common stonewort).